A 468-amino-acid polypeptide reads, in one-letter code: Spliceosome-associated protein CWC27 homolog (468 aa).

Residue S2 is modified to N-acetylserine. Residues T11–V166 form the PPIase cyclophilin-type domain. Disordered regions lie at residues L204 to T382 and R427 to R468. A coiled-coil region spans residues S206–S229. Basic and acidic residues predominate over residues S231–H241. The segment covering T256–V268 has biased composition (acidic residues). 2 stretches are compositionally biased toward basic and acidic residues: residues E269 to A287 and G302 to G342. Phosphoserine is present on S273. Residues A309–G342 adopt a coiled-coil conformation. S343 is subject to Phosphoserine. Composition is skewed to basic and acidic residues over residues E356–R368 and R453–R468.

It belongs to the cyclophilin-type PPIase family. As to quaternary structure, part of the activated spliceosome B/catalytic step 1 spliceosome, one of the forms of the spliceosome which has a well-formed active site but still cannot catalyze the branching reaction and is composed at least of 52 proteins, the U2, U5 and U6 snRNAs and the pre-mRNA. Recruited during early steps of activated spliceosome B maturation, it is probably one of the first proteins released from this complex as he matures to the spliceosome C complex. Component of the minor spliceosome, which splices U12-type introns.

Its subcellular location is the nucleus. Functionally, as part of the spliceosome, plays a role in pre-mRNA splicing. Probable inactive PPIase with no peptidyl-prolyl cis-trans isomerase activity. As a component of the minor spliceosome, involved in the splicing of U12-type introns in pre-mRNAs. This chain is Spliceosome-associated protein CWC27 homolog, found in Rattus norvegicus (Rat).